A 147-amino-acid chain; its full sequence is Hemoglobin subunit beta (147 aa).

Val-2 is modified (N-acetylvaline). The Globin domain maps to 3-147 (HMSAEEKGIV…VAAALAHKYH (145 aa)). Thr-13 bears the Phosphothreonine mark. Residue Ser-45 is modified to Phosphoserine. Lys-60 carries the post-translational modification N6-acetyllysine. Heme b is bound at residue His-64. Lys-83 is subject to N6-acetyllysine. His-93 lines the heme b pocket. Cys-94 is modified (S-nitrosocysteine). An N6-acetyllysine modification is found at Lys-145.

It belongs to the globin family. In terms of assembly, heterotetramer of two alpha chains and two beta chains. Red blood cells.

Its function is as follows. Involved in oxygen transport from the lung to the various peripheral tissues. The chain is Hemoglobin subunit beta (HBB) from Scalopus aquaticus (Eastern mole).